Consider the following 37-residue polypeptide: Calcitonin gene-related peptide 1 (37 aa).

A disulfide bond links Cys-2 and Cys-7. Residue Phe-37 is modified to Phenylalanine amide.

This sequence belongs to the calcitonin family.

It localises to the secreted. Its function is as follows. CGRP1/CALCA is a peptide hormone that induces vasodilation mediated by the CALCRL-RAMP1 receptor complex. Dilates a variety of vessels including the coronary, cerebral and systemic vasculature. Its abundance in the CNS also points toward a neurotransmitter or neuromodulator role. It also elevates platelet cAMP. CGRP1 can also bind and activate CALCR-RAMP1 (AMYR1) receptor complex. This is Calcitonin gene-related peptide 1 (CALCA) from Sus scrofa (Pig).